Here is a 381-residue protein sequence, read N- to C-terminus: cAMP-dependent protein kinase type I-beta regulatory subunit (381 aa).

A dimerization and phosphorylation region spans residues 1 to 136; sequence MASPSCFHSE…ALAKAISKNV (136 aa). Position 3 is a phosphoserine (S3). Y21 is subject to 3'-nitrotyrosine. Residues 66–88 are disordered; that stretch reads LARQKSNSQCDSHDEEISPTPPN. A phosphoserine mark is found at S77 and S83. A Phosphothreonine modification is found at T85. The short motif at 96–100 is the Pseudophosphorylation motif element; that stretch reads RRGGV. R97 carries the omega-N-methylarginine modification. 3',5'-cyclic AMP-binding positions include 137–254, E202, R211, 255–381, E326, and R335; these read LFSH…SKVS and ILES…SLTV.

Belongs to the cAMP-dependent kinase regulatory chain family. The inactive holoenzyme is composed of two regulatory chains and two catalytic chains. Activation by cAMP releases the two active catalytic monomers and the regulatory dimer. Interacts with PRKX; regulates this cAMP-dependent protein kinase. Interacts with smAKAP; this interaction may target PRKAR1B to the plasma membrane. Post-translationally, the pseudophosphorylation site binds to the substrate-binding region of the catalytic chain, resulting in the inhibition of its activity. In terms of tissue distribution, abundant in brain and testis. No expression in lung, heart, liver, spleen, kidney and skeletal muscle.

It localises to the cell membrane. Its function is as follows. Regulatory subunit of the cAMP-dependent protein kinases involved in cAMP signaling in cells. In Rattus norvegicus (Rat), this protein is cAMP-dependent protein kinase type I-beta regulatory subunit (Prkar1b).